We begin with the raw amino-acid sequence, 397 residues long: Succinate--CoA ligase [ADP-forming] subunit beta (397 aa).

One can recognise an ATP-grasp domain in the interval 9 to 254 (KALLREFGVP…ESEEDAKEIE (246 aa)). ATP-binding positions include Lys-46, 53–55 (GRG), Glu-109, Ser-112, and Glu-117. Mg(2+)-binding residues include Asn-209 and Asp-223. Substrate contacts are provided by residues Asn-274 and 331 to 333 (GIM).

It belongs to the succinate/malate CoA ligase beta subunit family. As to quaternary structure, heterotetramer of two alpha and two beta subunits. The cofactor is Mg(2+).

The enzyme catalyses succinate + ATP + CoA = succinyl-CoA + ADP + phosphate. It carries out the reaction GTP + succinate + CoA = succinyl-CoA + GDP + phosphate. It functions in the pathway carbohydrate metabolism; tricarboxylic acid cycle; succinate from succinyl-CoA (ligase route): step 1/1. Its function is as follows. Succinyl-CoA synthetase functions in the citric acid cycle (TCA), coupling the hydrolysis of succinyl-CoA to the synthesis of either ATP or GTP and thus represents the only step of substrate-level phosphorylation in the TCA. The beta subunit provides nucleotide specificity of the enzyme and binds the substrate succinate, while the binding sites for coenzyme A and phosphate are found in the alpha subunit. The chain is Succinate--CoA ligase [ADP-forming] subunit beta from Nitrobacter hamburgensis (strain DSM 10229 / NCIMB 13809 / X14).